Reading from the N-terminus, the 342-residue chain is Keratin-associated protein 29-1 (342 aa).

Tandem repeats lie at residues 5-9, 91-95, 239-243, 309-313, and 324-328. The 5 X 5 AA repeats of C-C-X(3) stretch occupies residues 5 to 328; sequence CCPENPTAVP…SSGPGCCPPT (324 aa).

This sequence belongs to the KRTAP type 10 family.

In Mus musculus (Mouse), this protein is Keratin-associated protein 29-1 (Krtap29-1).